Reading from the N-terminus, the 229-residue chain is 2-C-methyl-D-erythritol 4-phosphate cytidylyltransferase (229 aa).

Belongs to the IspD/TarI cytidylyltransferase family. IspD subfamily. As to quaternary structure, homodimer.

The catalysed reaction is 2-C-methyl-D-erythritol 4-phosphate + CTP + H(+) = 4-CDP-2-C-methyl-D-erythritol + diphosphate. It participates in isoprenoid biosynthesis; isopentenyl diphosphate biosynthesis via DXP pathway; isopentenyl diphosphate from 1-deoxy-D-xylulose 5-phosphate: step 2/6. Catalyzes the formation of 4-diphosphocytidyl-2-C-methyl-D-erythritol from CTP and 2-C-methyl-D-erythritol 4-phosphate (MEP). The polypeptide is 2-C-methyl-D-erythritol 4-phosphate cytidylyltransferase (Wigglesworthia glossinidia brevipalpis).